The primary structure comprises 395 residues: MNEQGLSEKEIFSYLEDVKSEDTDYYRVLSSMCTHPHRIAVEAHRLFIEANLGDLGLFAGAHRLEKEVIRMLGELLHAQSVEIPSGEACESSVCGYLTTGGTESNIQAIRGMKNLVTEDGKKSGEILNIVVPESAHFSFDKVANMMGIEVKRASLDPEFRVDIASAESLIDANTIGLVGIAGNTEFGQVDPIEELSKLALENELFLHVDAAFGGFVIPFLEKPYSFDFKVPGVTSIAIDPHKMGLSTIPSGALLFRSPFFMDSLKVNTPYLTTKSQFTLTGTRSGASAAATYAVMKYLGREGYRKNVQYCMQLTTKLVKEARKFGFEPLIEPVMNVVDLRVPNPDIVREQLLKKFGWNVSITRNPRSLRLVLMPHNTARDIEEFLQDLRKVTTEL.

The residue at position 242 (lysine 242) is an N6-(pyridoxal phosphate)lysine.

This sequence belongs to the group II decarboxylase family. MfnA subfamily. The cofactor is pyridoxal 5'-phosphate.

It carries out the reaction L-tyrosine + H(+) = tyramine + CO2. It catalyses the reaction L-aspartate + H(+) = beta-alanine + CO2. It functions in the pathway cofactor biosynthesis; methanofuran biosynthesis. Its pathway is cofactor biosynthesis; coenzyme A biosynthesis. In terms of biological role, catalyzes the decarboxylation of L-tyrosine to produce tyramine for methanofuran biosynthesis. Can also catalyze the decarboxylation of L-aspartate to produce beta-alanine for coenzyme A (CoA) biosynthesis. The chain is Probable L-tyrosine/L-aspartate decarboxylase from Methanosarcina barkeri (strain Fusaro / DSM 804).